We begin with the raw amino-acid sequence, 391 residues long: Mannonate dehydratase (391 aa).

The protein belongs to the mannonate dehydratase family. It depends on Fe(2+) as a cofactor. Mn(2+) serves as cofactor.

The enzyme catalyses D-mannonate = 2-dehydro-3-deoxy-D-gluconate + H2O. It functions in the pathway carbohydrate metabolism; pentose and glucuronate interconversion. Catalyzes the dehydration of D-mannonate. This chain is Mannonate dehydratase, found in Marinomonas sp. (strain MWYL1).